The primary structure comprises 309 residues: Chronophin (309 aa).

Aspartate 25 functions as the Nucleophile in the catalytic mechanism. Mg(2+)-binding residues include aspartate 25 and aspartate 27. Residue aspartate 27 is the Proton donor of the active site. Substrate-binding positions include 58-60, histidine 178, and lysine 209; that span reads SNN. Residue aspartate 234 coordinates Mg(2+).

This sequence belongs to the HAD-like hydrolase superfamily. Homodimer. Mg(2+) is required as a cofactor.

The protein localises to the cytoplasm. Its subcellular location is the cytosol. It is found in the cytoskeleton. The protein resides in the cell projection. It localises to the ruffle membrane. The protein localises to the lamellipodium membrane. Its subcellular location is the cell membrane. It carries out the reaction pyridoxal 5'-phosphate + H2O = pyridoxal + phosphate. The enzyme catalyses pyridoxine 5'-phosphate + H2O = pyridoxine + phosphate. It catalyses the reaction pyridoxamine + phosphate = pyridoxamine 5'-phosphate + H2O. The catalysed reaction is O-phospho-L-seryl-[protein] + H2O = L-seryl-[protein] + phosphate. Functionally, functions as a pyridoxal phosphate (PLP) phosphatase, which also catalyzes the dephosphorylation of pyridoxine 5'-phosphate (PNP) and pyridoxamine 5'-phosphate (PMP), with order of substrate preference PLP &gt; PNP &gt; PMP and therefore plays a role in vitamin B6 metabolism. Also functions as a protein serine phosphatase that specifically dephosphorylates 'Ser-3' in proteins of the actin-depolymerizing factor (ADF)/cofilin family like CFL1 and DSTN. Thereby, regulates cofilin-dependent actin cytoskeleton reorganization, being required for normal progress through mitosis and normal cytokinesis. Does not dephosphorylate phosphothreonines in LIMK1. Does not dephosphorylate peptides containing phosphotyrosine. The sequence is that of Chronophin from Rattus norvegicus (Rat).